Here is a 156-residue protein sequence, read N- to C-terminus: 6,7-dimethyl-8-ribityllumazine synthase (156 aa).

Residues Phe-25, 59–61 (AFE), and 83–85 (AVI) each bind 5-amino-6-(D-ribitylamino)uracil. 88–89 (GT) contacts (2S)-2-hydroxy-3-oxobutyl phosphate. Residue His-91 is the Proton donor of the active site. Residue Phe-116 coordinates 5-amino-6-(D-ribitylamino)uracil. Residue Arg-130 participates in (2S)-2-hydroxy-3-oxobutyl phosphate binding.

The protein belongs to the DMRL synthase family.

It carries out the reaction (2S)-2-hydroxy-3-oxobutyl phosphate + 5-amino-6-(D-ribitylamino)uracil = 6,7-dimethyl-8-(1-D-ribityl)lumazine + phosphate + 2 H2O + H(+). It functions in the pathway cofactor biosynthesis; riboflavin biosynthesis; riboflavin from 2-hydroxy-3-oxobutyl phosphate and 5-amino-6-(D-ribitylamino)uracil: step 1/2. Catalyzes the formation of 6,7-dimethyl-8-ribityllumazine by condensation of 5-amino-6-(D-ribitylamino)uracil with 3,4-dihydroxy-2-butanone 4-phosphate. This is the penultimate step in the biosynthesis of riboflavin. The sequence is that of 6,7-dimethyl-8-ribityllumazine synthase from Desulfovibrio desulfuricans (strain ATCC 27774 / DSM 6949 / MB).